A 185-amino-acid chain; its full sequence is uncharacterized protein (185 aa).

A signal peptide spans 1 to 24; the sequence is MPCNRAVFGAFVLALLISLQSVYF. The chain crosses the membrane as a helical span at residues 50-70; the sequence is VAVNVIVEFSFDILFFLCGLL. Residues 96 to 113 are compositionally biased toward basic and acidic residues; sequence ELEHVSSRRRNDSRDDST. The disordered stretch occupies residues 96-185; that stretch reads ELEHVSSRRR…LFTAGGIGLP (90 aa). Residues 114-126 are compositionally biased toward polar residues; sequence VRNVSKTSPLASQ. A compositionally biased stretch (basic and acidic residues) spans 127–138; it reads RSRDHFDGDPRE. A compositionally biased stretch (pro residues) spans 139–155; that stretch reads PAPPAYSPADFYPPPAS.

The protein localises to the host membrane. This is an uncharacterized protein from Colorado tick fever virus (strain USA/Florio N-7180) (CTFV).